Reading from the N-terminus, the 896-residue chain is Zinc finger protein 574 (896 aa).

3 consecutive C2H2-type zinc fingers follow at residues tyrosine 16–histidine 38, tyrosine 76–histidine 98, and tyrosine 126–histidine 148. Serine 164 bears the Phosphoserine mark. Residues tyrosine 214–histidine 236 form a C2H2-type 4 zinc finger. Positions alanine 239–alanine 301 are disordered. The span at proline 247–serine 257 shows a compositional bias: polar residues. A compositionally biased stretch (basic and acidic residues) spans histidine 274 to aspartate 287. Position 298 is a phosphoserine (serine 298). 4 C2H2-type zinc fingers span residues leucine 309 to histidine 331, phenylalanine 336 to histidine 358, phenylalanine 364 to histidine 386, and histidine 392 to histidine 413. The segment at phenylalanine 434–proline 460 is disordered. 6 consecutive C2H2-type zinc fingers follow at residues tyrosine 466–histidine 489, histidine 495–histidine 517, phenylalanine 523–histidine 545, tyrosine 551–histidine 573, tyrosine 579–histidine 601, and tyrosine 607–histidine 630. The C2H2-type 15; degenerate zinc finger occupies histidine 636–alanine 659. The C2H2-type 16 zinc-finger motif lies at phenylalanine 667–histidine 689. Residues alanine 687 to alanine 733 form a disordered region. Residues alanine 707–proline 732 are compositionally biased toward low complexity. At serine 717 the chain carries Phosphoserine. At threonine 724 the chain carries Phosphothreonine. Phosphoserine is present on serine 728. 4 C2H2-type zinc fingers span residues leucine 738–histidine 760, tyrosine 766–histidine 788, phenylalanine 794–histidine 816, and tyrosine 822–histidine 844. Residue arginine 832 is modified to Asymmetric dimethylarginine.

The protein belongs to the krueppel C2H2-type zinc-finger protein family.

The protein resides in the nucleus. Functionally, may be involved in transcriptional regulation. The polypeptide is Zinc finger protein 574 (ZNF574) (Macaca fascicularis (Crab-eating macaque)).